A 449-amino-acid chain; its full sequence is Myb-related protein Pp1 (449 aa).

The HTH myb-type domain occupies 1 to 30 (LGNRWSAIAIPRRTDNEIKNYWNTHLKKRL). Residues 5–26 (WSAIAIPRRTDNEIKNYWNTHL) constitute a DNA-binding region (H-T-H motif).

It localises to the nucleus. Functionally, possible transcription activator. The sequence is that of Myb-related protein Pp1 (PP1) from Physcomitrium patens (Spreading-leaved earth moss).